The sequence spans 413 residues: S-adenosylmethionine synthase (413 aa).

H15 serves as a coordination point for ATP. D17 contacts Mg(2+). E43 lines the K(+) pocket. L-methionine-binding residues include E56 and Q100. The segment at Q100–D110 is flexible loop. Residues D171–K173, K248–F249, D257, R263–K264, A280, and K284 contribute to the ATP site. D257 serves as a coordination point for L-methionine. An L-methionine-binding site is contributed by K288.

Belongs to the AdoMet synthase family. In terms of assembly, homotetramer; dimer of dimers. Requires Mg(2+) as cofactor. The cofactor is K(+).

It is found in the cytoplasm. The catalysed reaction is L-methionine + ATP + H2O = S-adenosyl-L-methionine + phosphate + diphosphate. Its pathway is amino-acid biosynthesis; S-adenosyl-L-methionine biosynthesis; S-adenosyl-L-methionine from L-methionine: step 1/1. Catalyzes the formation of S-adenosylmethionine (AdoMet) from methionine and ATP. The overall synthetic reaction is composed of two sequential steps, AdoMet formation and the subsequent tripolyphosphate hydrolysis which occurs prior to release of AdoMet from the enzyme. In Prochlorococcus marinus (strain MIT 9301), this protein is S-adenosylmethionine synthase.